The following is a 644-amino-acid chain: Threonine--tRNA ligase (644 aa).

In terms of domain architecture, TGS spans 1–61 (MVAITLPDGN…TQDASVEIVT (61 aa)). The segment at 242-533 (DHRKIGKALN…LIEHYAGWMP (292 aa)) is catalytic. Residues C333, H384, and H510 each contribute to the Zn(2+) site.

Belongs to the class-II aminoacyl-tRNA synthetase family. As to quaternary structure, homodimer. The cofactor is Zn(2+).

Its subcellular location is the cytoplasm. It catalyses the reaction tRNA(Thr) + L-threonine + ATP = L-threonyl-tRNA(Thr) + AMP + diphosphate + H(+). Catalyzes the attachment of threonine to tRNA(Thr) in a two-step reaction: L-threonine is first activated by ATP to form Thr-AMP and then transferred to the acceptor end of tRNA(Thr). Also edits incorrectly charged L-seryl-tRNA(Thr). This is Threonine--tRNA ligase from Psychrobacter sp. (strain PRwf-1).